Consider the following 364-residue polypeptide: Mannose-1-phosphate guanyltransferase (364 aa).

Belongs to the transferase hexapeptide repeat family.

The protein resides in the cytoplasm. It carries out the reaction alpha-D-mannose 1-phosphate + GTP + H(+) = GDP-alpha-D-mannose + diphosphate. The protein operates within nucleotide-sugar biosynthesis; GDP-alpha-D-mannose biosynthesis; GDP-alpha-D-mannose from alpha-D-mannose 1-phosphate (GTP route): step 1/1. Its function is as follows. Involved in cell wall synthesis where it is required for glycosylation. Involved in cell cycle progression through cell-size checkpoint. The sequence is that of Mannose-1-phosphate guanyltransferase (MPG1) from Pichia angusta (Yeast).